We begin with the raw amino-acid sequence, 393 residues long: Flap endonuclease 1 (393 aa).

The N-domain stretch occupies residues 1–108 (MGILGLSKLL…SELQERRQRA (108 aa)). Residue Asp34 coordinates Mg(2+). DNA is bound at residue Arg74. Positions 90, 162, 164, 183, and 185 each coordinate Mg(2+). An I-domain region spans residues 126–257 (LMEKMSKRTV…QKAWEGIKKH (132 aa)). DNA is bound at residue Glu162. The DNA site is built by Gly235 and Asp237. A Mg(2+)-binding site is contributed by Asp237. An interaction with PCNA region spans residues 340–348 (TQGRLDQFF).

It belongs to the XPG/RAD2 endonuclease family. FEN1 subfamily. In terms of assembly, interacts with PCNA. Three molecules of FEN1 bind to one PCNA trimer with each molecule binding to one PCNA monomer. PCNA stimulates the nuclease activity without altering cleavage specificity. Requires Mg(2+) as cofactor. In terms of processing, phosphorylated. Phosphorylation upon DNA damage induces relocalization to the nuclear plasma.

Its subcellular location is the nucleus. It is found in the nucleolus. It localises to the nucleoplasm. The protein localises to the mitochondrion. Structure-specific nuclease with 5'-flap endonuclease and 5'-3' exonuclease activities involved in DNA replication and repair. During DNA replication, cleaves the 5'-overhanging flap structure that is generated by displacement synthesis when DNA polymerase encounters the 5'-end of a downstream Okazaki fragment. It enters the flap from the 5'-end and then tracks to cleave the flap base, leaving a nick for ligation. Also involved in the long patch base excision repair (LP-BER) pathway, by cleaving within the apurinic/apyrimidinic (AP) site-terminated flap. Acts as a genome stabilization factor that prevents flaps from equilibrating into structures that lead to duplications and deletions. Also possesses 5'-3' exonuclease activity on nicked or gapped double-stranded DNA, and exhibits RNase H activity. Also involved in replication and repair of rDNA and in repairing mitochondrial DNA. This chain is Flap endonuclease 1, found in Trypanosoma cruzi (strain CL Brener).